We begin with the raw amino-acid sequence, 85 residues long: Antibacterial factor-related peptide 1 (85 aa).

Positions 1 to 19 (MLYFCLLLVLLLPNNGVSS) are cleaved as a signal peptide.

In terms of tissue distribution, expressed in the pharynx and body wall muscle.

The protein resides in the secreted. This is Antibacterial factor-related peptide 1 from Caenorhabditis elegans.